The primary structure comprises 228 residues: Cytidylate kinase (228 aa).

11–19 (GPAGTGKSS) is an ATP binding site.

It belongs to the cytidylate kinase family. Type 1 subfamily.

The protein localises to the cytoplasm. It catalyses the reaction CMP + ATP = CDP + ADP. It carries out the reaction dCMP + ATP = dCDP + ADP. This Mycolicibacterium paratuberculosis (strain ATCC BAA-968 / K-10) (Mycobacterium paratuberculosis) protein is Cytidylate kinase.